A 354-amino-acid chain; its full sequence is Probable L-ascorbate-6-phosphate lactonase UlaG (354 aa).

Belongs to the UlaG family. Requires a divalent metal cation as cofactor.

It is found in the cytoplasm. The enzyme catalyses L-ascorbate 6-phosphate + H2O = 3-dehydro-L-gulonate 6-phosphate. Its pathway is cofactor degradation; L-ascorbate degradation; D-xylulose 5-phosphate from L-ascorbate: step 1/4. Its function is as follows. Probably catalyzes the hydrolysis of L-ascorbate-6-P into 3-keto-L-gulonate-6-P. Is essential for L-ascorbate utilization under anaerobic conditions. The protein is Probable L-ascorbate-6-phosphate lactonase UlaG of Escherichia coli (strain SMS-3-5 / SECEC).